Here is an 810-residue protein sequence, read N- to C-terminus: MRISLNWLRELVQVDLEPEVLAEKLTLAGFEVEEIEDRRTWAAGVVVGRVLEREQHPNADRLSVCQVEIGQAEPVTIVCGASNVRADIWVAVATLGSYLPCIDLKLKPTKLRGVRSEGMICSLSELGLTKESEGIHIFPEDAGLQAGQPVGPLLGLDDVVLDLTSTANRADALSLIGIAREVRALTAATLTLPEVELQTYPELPCLAISLQSEACSHYSGTIIEGVTIAPSPEWLQKRLQLAGIRTINNVVDITNYILLEYGQPLHAFDRQKLQAIAGSSDLAIGVRSAQAGETLKTLDDQERTLAEAALVITAGDCPVALAGVMGGADSEVSQETTQLLLEAAWFEPIAVRRSARSQGLRTEASARYERGVNVTELPIATQRAIDLLLQIAGGTVISQTVATTTQTEPEHSITLRLQRINELLGPVQAEDEELKDLGADDIERLLTAIGCHLTLVDDAVWQVRVPPYRYRDLEREIDLIEEVARLYGYDNFGETLPPLGSDEGALSIDESLRRQIRAVCRGVGLTELQHYSLVKPGSDRQVHLANPLLAEYSALRLDLLSGLIDAFQYNWEQGNGPLWGFEIGRIFWREEDGFFEADRMGGILGGDPSRGRWQRGGKEQAIDWYAAKGVLEEIFERFGLTIEFQPDRQDDRFHPGRTASLWLQGDRLGRFGQLHPSLCEGRGLPAEVYAFELDLDVWLDHLDQPERQVPRFQPYSSFPASDRDLAFFVDQSVTVAELERIIRRQGGALLSEVELFDQYCGEHVPENQRSLAFRLTYRASDRTLTEAEVEPVHDQVRQSLVERFRVTLRS.

The region spanning 39–151 (RTWAAGVVVG…AGLQAGQPVG (113 aa)) is the tRNA-binding domain. Positions 408 to 494 (EPEHSITLRL…RLYGYDNFGE (87 aa)) constitute a B5 domain. Residues aspartate 472, aspartate 478, glutamate 481, and glutamate 482 each coordinate Mg(2+). In terms of domain architecture, FDX-ACB spans 716–809 (SSFPASDRDL…LVERFRVTLR (94 aa)).

It belongs to the phenylalanyl-tRNA synthetase beta subunit family. Type 1 subfamily. In terms of assembly, tetramer of two alpha and two beta subunits. It depends on Mg(2+) as a cofactor.

Its subcellular location is the cytoplasm. It carries out the reaction tRNA(Phe) + L-phenylalanine + ATP = L-phenylalanyl-tRNA(Phe) + AMP + diphosphate + H(+). This Synechococcus elongatus (strain ATCC 33912 / PCC 7942 / FACHB-805) (Anacystis nidulans R2) protein is Phenylalanine--tRNA ligase beta subunit (pheT).